We begin with the raw amino-acid sequence, 502 residues long: Intracellular exo-alpha-(1-&gt;5)-L-arabinofuranosidase (502 aa).

The alpha-L-arabinofuranose site is built by glutamate 29, asparagine 74, and asparagine 174. Catalysis depends on glutamate 175, which acts as the Proton donor/acceptor. The alpha-L-arabinofuranose site is built by tyrosine 246, glutamate 294, and glutamine 351. The Nucleophile role is filled by glutamate 294.

The protein belongs to the glycosyl hydrolase 51 family. Homohexamer; trimer of dimers.

Its subcellular location is the cytoplasm. The enzyme catalyses Hydrolysis of terminal non-reducing alpha-L-arabinofuranoside residues in alpha-L-arabinosides.. It functions in the pathway glycan metabolism; L-arabinan degradation. With respect to regulation, strongly inhibited by Hg(2+). Involved in the degradation of arabinan and is a key enzyme in the complete degradation of the plant cell wall. Catalyzes the cleavage of terminal alpha-(1-&gt;5)-arabinofuranosyl bonds in different hemicellulosic homopolysaccharides (branched and debranched arabinans). It acts preferentially on aryl-alpha-L-arabinofuranosides, and is much less effective on aryl-beta-D-xylopyranosides. This Geobacillus stearothermophilus (Bacillus stearothermophilus) protein is Intracellular exo-alpha-(1-&gt;5)-L-arabinofuranosidase (abfA).